The chain runs to 109 residues: Large ribosomal subunit protein uL24 (109 aa).

This sequence belongs to the universal ribosomal protein uL24 family. As to quaternary structure, part of the 50S ribosomal subunit.

Its function is as follows. One of two assembly initiator proteins, it binds directly to the 5'-end of the 23S rRNA, where it nucleates assembly of the 50S subunit. In terms of biological role, one of the proteins that surrounds the polypeptide exit tunnel on the outside of the subunit. This is Large ribosomal subunit protein uL24 from Syntrophotalea carbinolica (strain DSM 2380 / NBRC 103641 / GraBd1) (Pelobacter carbinolicus).